Reading from the N-terminus, the 211-residue chain is N-(5'-phosphoribosyl)anthranilate isomerase (211 aa).

It belongs to the TrpF family.

It carries out the reaction N-(5-phospho-beta-D-ribosyl)anthranilate = 1-(2-carboxyphenylamino)-1-deoxy-D-ribulose 5-phosphate. It functions in the pathway amino-acid biosynthesis; L-tryptophan biosynthesis; L-tryptophan from chorismate: step 3/5. This is N-(5'-phosphoribosyl)anthranilate isomerase from Pseudomonas aeruginosa (strain LESB58).